Reading from the N-terminus, the 479-residue chain is Type I inositol polyphosphate 5-phosphatase 8 (479 aa).

Catalytic regions lie at residues 300 to 315 and 379 to 394; these read DKVI…LRAS and KRRT…WKGD.

Belongs to the inositol polyphosphate 5-phosphatase family.

This chain is Type I inositol polyphosphate 5-phosphatase 8, found in Arabidopsis thaliana (Mouse-ear cress).